A 292-amino-acid polypeptide reads, in one-letter code: MSLVSAALFGLLQALTEFLPVSSTAHLLVFGELLGHSLDDRRFRAFVTIIQAGTTLAVLVYFRADIARLVAAAARGLARGRPFGTPEARLGWYIVLGTVPAALAGKLLEHRIEALGNWVIAGSLVALGLVLLAAERLASHRRRVEDVGAGDALLIGVAQALALVPGSSRSGTTITGGMLLGFTREAAARFSFLLSVPITLAAGAYKLWSTVPDLRGEAAWTVATVVGTVVSAVAGYLVIDWLLAWLRTRTTYVFVVWRLAAGAAIAALILSGVLPAGAEAPPPPPPALHAAP.

A run of 7 helical transmembrane segments spans residues 1–21 (MSLVSAALFGLLQALTEFLPV), 46–66 (FVTIIQAGTTLAVLVYFRADI), 90–110 (LGWYIVLGTVPAALAGKLLEH), 114–134 (ALGNWVIAGSLVALGLVLLAA), 192–212 (FLLSVPITLAAGAYKLWSTVP), 225–245 (VVGTVVSAVAGYLVIDWLLAW), and 253–273 (VFVVWRLAAGAAIAALILSGV).

Belongs to the UppP family.

The protein localises to the cell inner membrane. The catalysed reaction is di-trans,octa-cis-undecaprenyl diphosphate + H2O = di-trans,octa-cis-undecaprenyl phosphate + phosphate + H(+). Catalyzes the dephosphorylation of undecaprenyl diphosphate (UPP). Confers resistance to bacitracin. The sequence is that of Undecaprenyl-diphosphatase from Anaeromyxobacter dehalogenans (strain 2CP-1 / ATCC BAA-258).